Here is a 531-residue protein sequence, read N- to C-terminus: Protein RPN4 (531 aa).

Residues 338–432 form a disordered region; sequence RFPSPSTSAN…PSAHTSSSDG (95 aa). Residues 341-354 are compositionally biased toward polar residues; sequence SPSTSANVPSTATT. Low complexity predominate over residues 362 to 375; sequence SSSNRSCVSNSNEN. A Nuclear localization signal motif is present at residues 382–398; it reads KKPTSAVVSSNASRRKL. Positions 394–407 are enriched in basic residues; that stretch reads SRRKLINYTKKHLS. Residues 408 to 430 show a composition bias toward low complexity; that stretch reads SHSSTNSNSKPSTASPSAHTSSS.

As to quaternary structure, probably interacts with SEC63. Interacts with MUB1, UBR2 and RPN2. Post-translationally, ubiquitinated by UBR2 in the presence of UBC2; which leads to proteasomal degradation.

The protein resides in the nucleus. Its function is as follows. Acts as a transcriptional activator of a number of genes encoding proteasomal subunits. Binds to a PACE (proteasome-associated control element) DNA sequence 5'-GGTGGCAAA-3'. Its expression is in turn regulated by the 26S proteasome, thereby providing a negative feedback control mechanism. Required for normal growth at low temperatures. In Saccharomyces cerevisiae (strain ATCC 204508 / S288c) (Baker's yeast), this protein is Protein RPN4 (RPN4).